The chain runs to 74 residues: MAKKPTQDFESTLKELEAIVSHLETGELPLEEALNEFETAVKLVQQGQERLQKAEQRIQILLNKNDQAELSDYE.

It belongs to the XseB family. In terms of assembly, heterooligomer composed of large and small subunits.

The protein localises to the cytoplasm. The catalysed reaction is Exonucleolytic cleavage in either 5'- to 3'- or 3'- to 5'-direction to yield nucleoside 5'-phosphates.. In terms of biological role, bidirectionally degrades single-stranded DNA into large acid-insoluble oligonucleotides, which are then degraded further into small acid-soluble oligonucleotides. This chain is Exodeoxyribonuclease 7 small subunit, found in Actinobacillus pleuropneumoniae serotype 5b (strain L20).